A 338-amino-acid polypeptide reads, in one-letter code: Starch-binding domain-containing protein 1 (338 aa).

At Met1 to Ser6 the chain is on the extracellular side. A helical membrane pass occupies residues Ala7–Leu23. Over Arg24–His338 the chain is Cytoplasmic. 2 disordered regions span residues Pro30–Val73 and Lys120–Pro148. Residues Ala36–Gly52 are compositionally biased toward low complexity. The segment covering Asp53–Gly62 has biased composition (gly residues). Ser68 carries the post-translational modification Phosphoserine. Basic and acidic residues predominate over residues Pro122–Ala132. Phosphoserine occurs at positions 140, 167, and 179. The LIR motif lies at His185–Val191. Ser195, Ser196, Ser205, Ser209, Ser212, Ser220, and Ser223 each carry phosphoserine. The CBM20 domain occupies Ser238–Ile337.

As to quaternary structure, interacts with the ATG8 family proteins GABARAP and GABARAPL1. Interacts with several glycogen-associated proteins, such as GYS2 (liver glycogen synthase), GDE (glycogen debranching enzyme), GBE1 (glycogen branching enzyme 1) and EPM2A (Laforin). In terms of processing, ubiquitinated, which leads to proteasomal degradation. In terms of tissue distribution, expressed at high level in glycogen-accumulating organs such as muscle and liver. Trace signals are also found in brain, kidney, and pancreas.

The protein localises to the preautophagosomal structure membrane. The protein resides in the endoplasmic reticulum membrane. Its subcellular location is the cell membrane. It localises to the sarcolemma. It is found in the T-tubule. In terms of biological role, acts as a cargo receptor for glycogen. Delivers its cargo to an autophagic pathway called glycophagy, resulting in the transport of glycogen to lysosomes. This chain is Starch-binding domain-containing protein 1, found in Mus musculus (Mouse).